Consider the following 432-residue polypeptide: Nuclear pore complex-interacting protein family member B9 (432 aa).

Disordered stretches follow at residues 260–280 (RMGR…NSLS) and 353–420 (SPLP…LRTR). The span at 270–280 (QQHSITDNSLS) shows a compositional bias: polar residues. Residues 374 to 402 (EVEKPPKPKRWRVDEVEQSPKPKRQREAE) show a composition bias toward basic and acidic residues. Over residues 408 to 420 (KPKRRRLSKLRTR) the composition is skewed to basic residues.

Belongs to the NPIP family.

The chain is Nuclear pore complex-interacting protein family member B9 (NPIPB9) from Homo sapiens (Human).